A 107-amino-acid chain; its full sequence is Colipase (107 aa).

A signal peptide spans 1-17 (MEKVLVLLLVALSVAYA). Residues 18–22 (APGPR) constitute a propeptide, enterostatin, activation peptide. 5 cysteine pairs are disulfide-bonded: Cys34–Cys45, Cys40–Cys56, Cys44–Cys78, Cys66–Cys86, and Cys80–Cys104.

This sequence belongs to the colipase family. Forms a 1:1 stoichiometric complex with pancreatic lipase. In terms of tissue distribution, expressed by the pancreas.

It localises to the secreted. In terms of biological role, colipase is a cofactor of pancreatic lipase. It allows the lipase to anchor itself to the lipid-water interface. Without colipase the enzyme is washed off by bile salts, which have an inhibitory effect on the lipase. Functionally, enterostatin has a biological activity as a satiety signal. The protein is Colipase (CLPS) of Oryctolagus cuniculus (Rabbit).